The chain runs to 361 residues: Heme A synthase (361 aa).

The next 8 membrane-spanning stretches (helical) occupy residues 22 to 42 (LWVR…VLVG), 109 to 129 (LLAR…WVTG), 139 to 159 (LLGI…MVAS), 175 to 195 (HLTI…GLAP), 208 to 228 (FAFW…LVAG), 269 to 289 (FVHR…AIAT), 303 to 323 (VLLF…LLMV), and 324 to 344 (VPMD…GFAT). A heme-binding site is contributed by His-271. His-332 lines the heme pocket.

This sequence belongs to the COX15/CtaA family. Type 2 subfamily. In terms of assembly, interacts with CtaB. Requires heme b as cofactor.

Its subcellular location is the cell membrane. The catalysed reaction is Fe(II)-heme o + 2 A + H2O = Fe(II)-heme a + 2 AH2. The protein operates within porphyrin-containing compound metabolism; heme A biosynthesis; heme A from heme O: step 1/1. Functionally, catalyzes the conversion of heme O to heme A by two successive hydroxylations of the methyl group at C8. The first hydroxylation forms heme I, the second hydroxylation results in an unstable dihydroxymethyl group, which spontaneously dehydrates, resulting in the formyl group of heme A. The sequence is that of Heme A synthase from Chelativorans sp. (strain BNC1).